The primary structure comprises 63 residues: Cecropin-A2 (63 aa).

The signal sequence occupies residues 1-23 (MNFYNIFVFVALILAITIGQSEA). Arg62 carries the post-translational modification Arginine amide.

This sequence belongs to the cecropin family. Strongly expressed in larval, pupal and adult fat body and hemocytes after injection of bacteria. Maximal expression in the adult involves fat body cells of the head, thorax and abdomen.

Its subcellular location is the secreted. Functionally, cecropins have lytic and antibacterial activity against several Gram-positive and Gram-negative bacteria. This is Cecropin-A2 from Drosophila melanogaster (Fruit fly).